We begin with the raw amino-acid sequence, 387 residues long: Acetylserotonin O-methyltransferase (387 aa).

S-adenosyl-L-methionine-binding positions include Tyr153, Trp170, Glu216, 246–248 (GDF), and Arg263. Residue His266 is the Proton donor/acceptor of the active site. 2 residues coordinate substrate: Asp267 and Gln317. The segment at 355–387 (ARGGGAGARSDGGGGEATSQTGSGTGREVGAQD) is disordered. Gly residues predominate over residues 356 to 370 (RGGGAGARSDGGGGE).

It belongs to the class I-like SAM-binding methyltransferase superfamily. Cation-independent O-methyltransferase family. Homodimer.

The catalysed reaction is N-acetylserotonin + S-adenosyl-L-methionine = melatonin + S-adenosyl-L-homocysteine + H(+). It participates in aromatic compound metabolism; melatonin biosynthesis; melatonin from serotonin: step 1/2. In terms of biological role, catalyzes the transfer of a methyl group onto N-acetylserotonin, producing melatonin (N-acetyl-5-methoxytryptamine). The chain is Acetylserotonin O-methyltransferase (Asmt) from Mus musculus molossinus (Japanese house mouse).